A 133-amino-acid chain; its full sequence is Large ribosomal subunit protein bL17 (133 aa).

The protein belongs to the bacterial ribosomal protein bL17 family. Part of the 50S ribosomal subunit. Contacts protein L32.

This Alteromonas mediterranea (strain DSM 17117 / CIP 110805 / LMG 28347 / Deep ecotype) protein is Large ribosomal subunit protein bL17.